The chain runs to 3726 residues: Zinc finger homeobox protein 3 (3726 aa).

Disordered stretches follow at residues 1–79 (MEGC…SKEV) and 95–129 (MEHHCPGTHPPPALREESASDTSEEGEEESDVENL). The segment at 79–103 (VSCNECSASFSSLQTYMEHHCPGTH) adopts a C2H2-type 1 zinc-finger fold. Positions 116–126 (TSEEGEEESDV) are enriched in acidic residues. The C2H2-type 2 zinc-finger motif lies at 282 to 305 (LMCFLCKLSFGYVRSFVTHAVHDH). A disordered region spans residues 417-557 (SVPLGPLASS…GPASTTSNSA (141 aa)). Residue serine 426 is modified to Phosphoserine. Threonine 428 bears the Phosphothreonine mark. Residues 431-459 (SEGKDSGAAEGDKQESGGHQDCFSEKVEP) are compositionally biased toward basic and acidic residues. 2 stretches are compositionally biased toward acidic residues: residues 460 to 491 (AEEEEAEEEEEEEEEAEEEEEEEEEEEEEEEE) and 500 to 510 (DLEEELEDSPS). The segment covering 528-557 (SNPSISNSPLMPNVLQTLSRGPASTTSNSA) has biased composition (polar residues). Phosphoserine is present on residues serine 535 and serine 573. The disordered stretch occupies residues 590–621 (DFADESANKDSATAPEPNESTEGDDGGFVPHH). C2H2-type zinc fingers lie at residues 641–664 (VECPKCDTVLGSSRSLGGHMTMMH), 672–695 (LKCPKCNWHYKYQQTLEAHMKEKH), and 727–751 (FRCEVCNYSTTTKGNLSIHMQSDKH). The C2H2-type 6; atypical zinc-finger motif lies at 805–829 (WRCEVCDYETNVARNLRIHMTSEKH). The C2H2-type 7; degenerate zinc-finger motif lies at 946-969 (FQCAVCNKFTTDNLDMLGLHMNVE). The C2H2-type 8; atypical zinc-finger motif lies at 985–1009 (YQCKLCRYNTQLKANFQLHCKTDKH). The C2H2-type 9; atypical zinc-finger motif lies at 1041–1065 (LKCNACDYYTNSLEKLRLHTVNSRH). A C2H2-type 10; atypical zinc finger spans residues 1089 to 1113 (YHCVLCNYSTKAKLNLIQHVRSMKH). Positions 1125–1228 (LQKGLPEEDE…KRPKASEEIK (104 aa)) are disordered. A compositionally biased stretch (acidic residues) spans 1149 to 1159 (DPEEPVEDAEG). Polar residues-rich tracts occupy residues 1175–1191 (GSGSEEGQSKRAASSSQ) and 1199–1217 (SPATTKRTSFPGSSETPLS). At serine 1207 the chain carries Phosphoserine. A C2H2-type 11; atypical zinc finger spans residues 1233-1256 (YQCPYCKYSNADVNRLRVHAMTQH). Residues 1262-1285 (LRCPLCQDMLNNKIHLQLHLTHLH) form a C2H2-type 12 zinc finger. Residues 1320–1361 (DGNSTLEEVGKQPEASEDPGKNILPPASMEHGGDLKPTSADP) are disordered. 3 consecutive C2H2-type zinc fingers follow at residues 1370 to 1395 (FLCWKKGCNQVFKTSATLQTHFNEVH), 1411 to 1433 (YRCNQCSLAFKTIEKLQLHSQYH), and 1439 to 1462 (TMCCLCQRSFRTFQALKKHLETSH). The tract at residues 1500-1539 (EEDKEEESDLEDKQSPTGSDSGSVQEDSGSEPKRALPFRK) is disordered. Residues 1514–1526 (SPTGSDSGSVQED) are compositionally biased toward polar residues. Residues 1555 to 1579 (YKCTVCKESFTQKNILLVHYNSVSH) form a C2H2-type 16 zinc finger. Phosphoserine is present on serine 1600. The C2H2-type 17 zinc-finger motif lies at 1606-1630 (FKCNTCNVAYSQSSTLEIHMRSVLH). Disordered regions lie at residues 1639-1678 (LEAASGNSNGTGNSGGVSLSSSTPSPVGSSGANNTFTATN), 1706-1738 (NPISANIASPSEPKEANRKKLADMIASRQQQQQ), and 1866-1943 (LSQS…PRIA). Residues 1643-1669 (SGNSNGTGNSGGVSLSSSTPSPVGSSG) are compositionally biased toward low complexity. Over residues 1717 to 1727 (EPKEANRKKLA) the composition is skewed to basic and acidic residues. Over residues 1866–1878 (LSQSHSALLQPSQ) the composition is skewed to low complexity. The segment covering 1879–1902 (HPEKKNKVVIKEKDKESQREREGP) has biased composition (basic and acidic residues). The C2H2-type 18 zinc finger occupies 1990-2013 (LECDSCGKLFSNILILKSHQEHVH). Disordered stretches follow at residues 2037–2089 (YPLR…AQPS) and 2211–2249 (NKDSPYNFSNPPITSLEELKIDSRPPSPEPQKQEYWGSK). The span at 2041–2066 (PQTPEPPPPPPPPPPPPLPTAPPQPA) shows a compositional bias: pro residues. Positions 2152–2211 (NKRPRTRITDDQLRVLRQYFDINNSPSEEQIKEMADKSGLPQKVIKHWFRNTLFKERQRN) form a DNA-binding region, homeobox 1. Positions 2214 to 2223 (SPYNFSNPPI) are enriched in polar residues. The homeobox 2 DNA-binding region spans 2249–2308 (KRSSRTRFTDYQLRVLQDFFDANAYPKDDEFEQLSNLLNLPTRVIVVWFQNARQKARKNY). Residues 2335 to 2358 (YQCKKCSLVFQRIFDLIKHQKKLC) form a C2H2-type 19; atypical zinc finger. A Glycyl lysine isopeptide (Lys-Gly) (interchain with G-Cter in SUMO1) cross-link involves residue lysine 2356. Disordered regions lie at residues 2383–2405 (TPTSSSCSTPMPSQAYSTPAPSA) and 2429–2529 (NSKA…PQQL). Positions 2458–2478 (QPKPEMQQQLEQLEQKTNAPQ) are enriched in low complexity. A compositionally biased stretch (pro residues) spans 2479-2507 (PKLPQPAAPSLPQPPPQAPPPQCPLPQSS). A compositionally biased stretch (low complexity) spans 2508 to 2521 (PSPSQLSHLPLKPL). The C2H2-type 20 zinc-finger motif lies at 2539-2561 (YQCDQCKLAFPSFEHWQEHQQLH). The short motif at 2624–2626 (KRK) is the Nuclear localization signal element. The disordered stretch occupies residues 2628–2656 (EEKASASPGENDSGTGGEEPQRDKRLRTT). A Phosphoserine modification is found at serine 2634. A DNA-binding region (homeobox 3) is located at residues 2650–2709 (DKRLRTTITPEQLEILYQKYLLDSNPTRKMLDHIAHEVGLKKRVVQVWFQNTRARERKGQ). The segment at 2720 to 2743 (RRCPFCRALFKAKTALEAHIRSRH) adopts a C2H2-type 21 zinc-finger fold. The segment covering 2780 to 2789 (SHLPPSSSDG) has biased composition (polar residues). A disordered region spans residues 2780-2805 (SHLPPSSSDGQGVPLSPVSKTMELSP). Residues serine 2795 and serine 2804 each carry the phosphoserine modification. Residue lysine 2815 forms a Glycyl lysine isopeptide (Lys-Gly) (interchain with G-Cter in SUMO1); alternate linkage. Lysine 2815 participates in a covalent cross-link: Glycyl lysine isopeptide (Lys-Gly) (interchain with G-Cter in SUMO2); alternate. Positions 2850–2877 (AITDTTTGDEGNADNDSATGIATETKSS) are disordered. A phosphoserine mark is found at serine 2900 and serine 2904. The segment at 2920 to 2955 (VDYSETSSLADPCSPSPGASGSAGKSGDGGDRPGQK) is disordered. Residues 2929–2944 (ADPCSPSPGASGSAGK) are compositionally biased toward low complexity. A DNA-binding region (homeobox 4) is located at residues 2952 to 3011 (PGQKRFRTQMTNLQLKVLKSCFNDYRTPTMLECEVLGNDIGLPKRVVQVWFQNARAKEKK). A C2H2-type 22 zinc finger spans residues 3032-3056 (TECTLCGIKYSARLSVRDHIFSQQH). Disordered stretches follow at residues 3145–3274 (FTPA…AGTG) and 3415–3476 (QQQQ…SASA). Polar residues predominate over residues 3147-3156 (PANTALTSPK). A compositionally biased stretch (low complexity) spans 3181–3199 (PSSASLSSPTPAQATMAMA). Residues 3200–3221 (PQPPPQPQQPQPPVQQPPPPPA) show a composition bias toward pro residues. The segment covering 3222-3234 (AQQIPAPQLTPQQ) has biased composition (low complexity). Residues 3235–3267 (QRKDKDGEKGKEKEKAHKGKGEPLPVPKKEKGE) show a composition bias toward basic and acidic residues. Lysine 3262 participates in a covalent cross-link: Glycyl lysine isopeptide (Lys-Gly) (interchain with G-Cter in SUMO1). At serine 3434 the chain carries Phosphoserine. A compositionally biased stretch (basic and acidic residues) spans 3435–3453 (PDKDPAKESPKPEEQKNVP). Serine 3457 carries the phosphoserine modification. Residues 3552 to 3576 (YHCLACESALCGEEALSQHLESALH) form a C2H2-type 23 zinc finger. A disordered region spans residues 3588 to 3726 (AKEHPSLLPH…TSVGTDTFRL (139 aa)). 2 stretches are compositionally biased toward low complexity: residues 3605–3618 (STASTSQSAAHSND) and 3645–3677 (SRASAAKPPSFPPLSSSSTVTSSSCSTSGVQPS). Serine 3616 carries the phosphoserine modification. Serine 3700 carries the post-translational modification Phosphoserine. Residues 3715–3726 (GLTSVGTDTFRL) show a composition bias toward polar residues.

As to quaternary structure, interacts with ALKBH4 and PIAS3. Interacts with FNBP3. Interacts with ESR1, RUNX3, TRIM25, SMAD2 and SMAD3. Phosphorylated at Ser-2634 in both embryonic and adult brain. Phosphorylation at Ser-1600, Ser-2795, Ser-2804, Ser-2900, Ser-3434, Ser-3616 and Ser-3700 is restricted to the embryonic brain. Hyperphosphorylation in embryonic brain protects ZFHX3 from calpain/CAPN1-mediated degradation. In terms of processing, ubiquitinated, leading to its proteasomal degradation. Post-translationally, nuclear localization is essential for its sumoylation. In terms of tissue distribution, expressed in suprachiasmatic nucleus (SCN) of the brain (at protein level). Expressed in skeletal muscle. Levels of expression are high in myoblasts but low in differentiated muscle. Expressed in the heart, primarily in the atria.

Its subcellular location is the nucleus. It localises to the cytoplasm. Functionally, transcriptional regulator which can act as an activator or a repressor. Inhibits the enhancer element of the AFP gene by binding to its AT-rich core sequence. In concert with SMAD-dependent TGF-beta signaling can repress the transcription of AFP via its interaction with SMAD2/3. Regulates the circadian locomotor rhythms via transcriptional activation of neuropeptidergic genes which are essential for intercellular synchrony and rhythm amplitude in the suprachiasmatic nucleus (SCN) of the brain. Regulator of myoblasts differentiation through the binding to the AT-rich sequence of MYF6 promoter and promoter repression. Down-regulates the MUC5AC promoter in gastric cancer. In association with RUNX3, up-regulates CDKN1A promoter activity following TGF-beta stimulation. The chain is Zinc finger homeobox protein 3 (Zfhx3) from Mus musculus (Mouse).